The following is a 421-amino-acid chain: Growth arrest-specific protein 7 (421 aa).

The tract at residues 1–117 is disordered; sequence MATALQKPGM…SPGRKQSKEN (117 aa). A WW domain is found at 22-55; the sequence is VILPPGWHSYLSPQGRRYYVNTTTNETTWERPSS. Polar residues predominate over residues 41 to 52; the sequence is VNTTTNETTWER. Low complexity predominate over residues 53–65; it reads PSSSPGISASPAP. 2 positions are modified to phosphoserine: Ser-62 and Ser-108. The span at 95–117 shows a compositional bias: polar residues; it reads RKSTGDSQNLGSSSPGRKQSKEN. In terms of domain architecture, F-BAR spans 141-401; it reads TEWSYCDYFW…LLRKVDPAKD (261 aa). Residues 254–328 adopt a coiled-coil conformation; that stretch reads ENFKKDMKKC…RKSTQAGDDL (75 aa).

In terms of tissue distribution, expressed abundantly in brain with lower levels in heart and testis. In the brain, expressed prominently in the Purkinje layer of the cerebellum, moderately in hippocampus, and less extensively in cerebral cortex and caudate putamen.

It is found in the cytoplasm. Functionally, may play a role in promoting maturation and morphological differentiation of cerebellar neurons. This is Growth arrest-specific protein 7 (Gas7) from Mus musculus (Mouse).